Reading from the N-terminus, the 765-residue chain is Phosphoribosylformylglycinamidine synthase subunit PurL (765 aa).

Over residues 1–13 the composition is skewed to polar residues; it reads MTVSPTSAPTQAI. The disordered stretch occupies residues 1–32; that stretch reads MTVSPTSAPTQAIDTVERAATTPDEPQPFGEL. Residue H65 is part of the active site. ATP contacts are provided by Y68 and K112. E114 contacts Mg(2+). Substrate contacts are provided by residues 115-118 and R137; that span reads SHNH. H116 serves as the catalytic Proton acceptor. Mg(2+) is bound at residue D138. Q263 provides a ligand contact to substrate. Residue D291 participates in Mg(2+) binding. 335–337 is a binding site for substrate; the sequence is ESQ. ATP is bound by residues N523 and G560. N561 serves as a coordination point for Mg(2+). S563 contacts substrate.

Belongs to the FGAMS family. As to quaternary structure, monomer. Part of the FGAM synthase complex composed of 1 PurL, 1 PurQ and 2 PurS subunits.

Its subcellular location is the cytoplasm. It catalyses the reaction N(2)-formyl-N(1)-(5-phospho-beta-D-ribosyl)glycinamide + L-glutamine + ATP + H2O = 2-formamido-N(1)-(5-O-phospho-beta-D-ribosyl)acetamidine + L-glutamate + ADP + phosphate + H(+). It functions in the pathway purine metabolism; IMP biosynthesis via de novo pathway; 5-amino-1-(5-phospho-D-ribosyl)imidazole from N(2)-formyl-N(1)-(5-phospho-D-ribosyl)glycinamide: step 1/2. Its function is as follows. Part of the phosphoribosylformylglycinamidine synthase complex involved in the purines biosynthetic pathway. Catalyzes the ATP-dependent conversion of formylglycinamide ribonucleotide (FGAR) and glutamine to yield formylglycinamidine ribonucleotide (FGAM) and glutamate. The FGAM synthase complex is composed of three subunits. PurQ produces an ammonia molecule by converting glutamine to glutamate. PurL transfers the ammonia molecule to FGAR to form FGAM in an ATP-dependent manner. PurS interacts with PurQ and PurL and is thought to assist in the transfer of the ammonia molecule from PurQ to PurL. This Mycolicibacterium paratuberculosis (strain ATCC BAA-968 / K-10) (Mycobacterium paratuberculosis) protein is Phosphoribosylformylglycinamidine synthase subunit PurL.